The primary structure comprises 255 residues: Ditrans,polycis-undecaprenyl-diphosphate synthase ((2E,6E)-farnesyl-diphosphate specific) (255 aa).

Asp-21 is a catalytic residue. Position 21 (Asp-21) interacts with Mg(2+). Residues 22–25, Trp-26, Arg-34, His-38, and 66–68 contribute to the substrate site; these read GNGR and SSE. The Proton acceptor role is filled by Asn-69. Substrate is bound by residues Trp-70, Arg-72, Arg-189, and 195–197; that span reads RIS. Glu-208 provides a ligand contact to Mg(2+).

The protein belongs to the UPP synthase family. Homodimer. Mg(2+) serves as cofactor.

The enzyme catalyses 8 isopentenyl diphosphate + (2E,6E)-farnesyl diphosphate = di-trans,octa-cis-undecaprenyl diphosphate + 8 diphosphate. In terms of biological role, catalyzes the sequential condensation of isopentenyl diphosphate (IPP) with (2E,6E)-farnesyl diphosphate (E,E-FPP) to yield (2Z,6Z,10Z,14Z,18Z,22Z,26Z,30Z,34E,38E)-undecaprenyl diphosphate (di-trans,octa-cis-UPP). UPP is the precursor of glycosyl carrier lipid in the biosynthesis of bacterial cell wall polysaccharide components such as peptidoglycan and lipopolysaccharide. This is Ditrans,polycis-undecaprenyl-diphosphate synthase ((2E,6E)-farnesyl-diphosphate specific) from Xylella fastidiosa (strain Temecula1 / ATCC 700964).